An 86-amino-acid polypeptide reads, in one-letter code: Small ribosomal subunit protein bS20 (86 aa).

The disordered stretch occupies residues Met-1–Asn-21.

Belongs to the bacterial ribosomal protein bS20 family.

Binds directly to 16S ribosomal RNA. This is Small ribosomal subunit protein bS20 from Opitutus terrae (strain DSM 11246 / JCM 15787 / PB90-1).